The primary structure comprises 372 residues: MGKSDRKLTEENSIENGVKPGKLTEEEMDAIDNSSQSKIVAIASMAKRLGLGLGSDLSQVEYPSSFIAPFSTLNFFSNNFANHFNILLRANKIENEMDRLIEVFKYSTTIHKIPEDCMKVPLNAVIGETQSLNFQTPDLNSPNDLISDNYLITEQVSELPPNTATCIYNKKEGVKALFNHESKIVFQITNVKTPTTGRKYVRFDKFDEEYDIEFPVLHSRFMRGFVEYCGEGSIKSNKSKCFVSTNYIAKPLIGGNYHAYEAKVYNGIDSKPIYKISGQWDGESKITNLKTNETKPFFKNITTTTNFTPTILNTDSSVVWGKIIQSVAQGKPINLAREKSKIIENQKTLNWAPSQFFLNLEMGVWEPKLLND.

Positions 1-10 (MGKSDRKLTE) are enriched in basic and acidic residues. Positions 1–25 (MGKSDRKLTEENSIENGVKPGKLTE) are disordered.

The protein belongs to the OSBP family.

The protein is Oxysterol-binding protein 3 (osbC) of Dictyostelium discoideum (Social amoeba).